Consider the following 179-residue polypeptide: Peptidyl-tRNA hydrolase (179 aa).

Tyrosine 15 is a tRNA binding site. Histidine 20 (proton acceptor) is an active-site residue. Tyrosine 66, asparagine 68, and asparagine 114 together coordinate tRNA.

This sequence belongs to the PTH family. Monomer.

It is found in the cytoplasm. It carries out the reaction an N-acyl-L-alpha-aminoacyl-tRNA + H2O = an N-acyl-L-amino acid + a tRNA + H(+). Hydrolyzes ribosome-free peptidyl-tRNAs (with 1 or more amino acids incorporated), which drop off the ribosome during protein synthesis, or as a result of ribosome stalling. Functionally, catalyzes the release of premature peptidyl moieties from peptidyl-tRNA molecules trapped in stalled 50S ribosomal subunits, and thus maintains levels of free tRNAs and 50S ribosomes. This Chlamydia muridarum (strain MoPn / Nigg) protein is Peptidyl-tRNA hydrolase.